The primary structure comprises 527 residues: Coproporphyrinogen III oxidase (527 aa).

Residues Met-1–Val-14 show a composition bias toward low complexity. The disordered stretch occupies residues Met-1–Asp-23. FAD contacts are provided by residues Gly-33–Gly-38, Glu-56–Ser-57, Lys-64, and Gly-78–Ser-81. The tract at residues Arg-231 to Ser-267 is disordered. A compositionally biased stretch (low complexity) spans Gln-236 to Ser-252. FAD-binding positions include Val-300, Trp-448, and Val-487–Leu-489.

This sequence belongs to the protoporphyrinogen/coproporphyrinogen oxidase family. Coproporphyrinogen III oxidase subfamily. It depends on FAD as a cofactor.

It localises to the cytoplasm. It catalyses the reaction coproporphyrinogen III + 3 O2 = coproporphyrin III + 3 H2O2. The protein operates within porphyrin-containing compound metabolism; protoheme biosynthesis. In terms of biological role, involved in coproporphyrin-dependent heme b biosynthesis. Catalyzes the oxidation of coproporphyrinogen III to coproporphyrin III. This Propionibacterium freudenreichii subsp. freudenreichii protein is Coproporphyrinogen III oxidase.